A 331-amino-acid polypeptide reads, in one-letter code: Ketol-acid reductoisomerase (NADP(+)) (331 aa).

In terms of domain architecture, KARI N-terminal Rossmann spans 1–181 (MKMYYDADAD…GGTRAGVIET (181 aa)). Residues 24–27 (YGSQ), R47, S50, and 82–85 (DEKQ) each bind NADP(+). H107 is an active-site residue. An NADP(+)-binding site is contributed by G133. The 146-residue stretch at 182 to 327 (TFREETETDL…KKLRAMMPWL (146 aa)) folds into the KARI C-terminal knotted domain. Mg(2+) is bound by residues D190, E194, E226, and E230. Position 251 (S251) interacts with substrate.

Belongs to the ketol-acid reductoisomerase family. Mg(2+) serves as cofactor.

The enzyme catalyses (2R)-2,3-dihydroxy-3-methylbutanoate + NADP(+) = (2S)-2-acetolactate + NADPH + H(+). It carries out the reaction (2R,3R)-2,3-dihydroxy-3-methylpentanoate + NADP(+) = (S)-2-ethyl-2-hydroxy-3-oxobutanoate + NADPH + H(+). It functions in the pathway amino-acid biosynthesis; L-isoleucine biosynthesis; L-isoleucine from 2-oxobutanoate: step 2/4. Its pathway is amino-acid biosynthesis; L-valine biosynthesis; L-valine from pyruvate: step 2/4. Functionally, involved in the biosynthesis of branched-chain amino acids (BCAA). Catalyzes an alkyl-migration followed by a ketol-acid reduction of (S)-2-acetolactate (S2AL) to yield (R)-2,3-dihydroxy-isovalerate. In the isomerase reaction, S2AL is rearranged via a Mg-dependent methyl migration to produce 3-hydroxy-3-methyl-2-ketobutyrate (HMKB). In the reductase reaction, this 2-ketoacid undergoes a metal-dependent reduction by NADPH to yield (R)-2,3-dihydroxy-isovalerate. The protein is Ketol-acid reductoisomerase (NADP(+)) of Heliobacterium modesticaldum (strain ATCC 51547 / Ice1).